Here is a 95-residue protein sequence, read N- to C-terminus: Co-chaperonin GroES (95 aa).

This sequence belongs to the GroES chaperonin family. Heptamer of 7 subunits arranged in a ring. Interacts with the chaperonin GroEL.

It is found in the cytoplasm. In terms of biological role, together with the chaperonin GroEL, plays an essential role in assisting protein folding. The GroEL-GroES system forms a nano-cage that allows encapsulation of the non-native substrate proteins and provides a physical environment optimized to promote and accelerate protein folding. GroES binds to the apical surface of the GroEL ring, thereby capping the opening of the GroEL channel. The polypeptide is Co-chaperonin GroES (Bordetella avium (strain 197N)).